A 158-amino-acid polypeptide reads, in one-letter code: Cyclic pyranopterin monophosphate synthase (158 aa).

Substrate contacts are provided by residues 74–76 (MCH) and 112–113 (ME). Asp-127 is an active-site residue.

The protein belongs to the MoaC family. As to quaternary structure, homohexamer; trimer of dimers.

It carries out the reaction (8S)-3',8-cyclo-7,8-dihydroguanosine 5'-triphosphate = cyclic pyranopterin phosphate + diphosphate. The protein operates within cofactor biosynthesis; molybdopterin biosynthesis. Its function is as follows. Catalyzes the conversion of (8S)-3',8-cyclo-7,8-dihydroguanosine 5'-triphosphate to cyclic pyranopterin monophosphate (cPMP). This Helicobacter pylori (strain ATCC 700392 / 26695) (Campylobacter pylori) protein is Cyclic pyranopterin monophosphate synthase.